The chain runs to 272 residues: 2,3,4,5-tetrahydropyridine-2,6-dicarboxylate N-succinyltransferase (272 aa).

Residues Arg-104 and Asp-141 each coordinate substrate.

It belongs to the transferase hexapeptide repeat family. Homotrimer.

It is found in the cytoplasm. The enzyme catalyses (S)-2,3,4,5-tetrahydrodipicolinate + succinyl-CoA + H2O = (S)-2-succinylamino-6-oxoheptanedioate + CoA. Its pathway is amino-acid biosynthesis; L-lysine biosynthesis via DAP pathway; LL-2,6-diaminopimelate from (S)-tetrahydrodipicolinate (succinylase route): step 1/3. This chain is 2,3,4,5-tetrahydropyridine-2,6-dicarboxylate N-succinyltransferase, found in Alkalilimnicola ehrlichii (strain ATCC BAA-1101 / DSM 17681 / MLHE-1).